The primary structure comprises 705 residues: Glycine--tRNA ligase beta subunit (705 aa).

This sequence belongs to the class-II aminoacyl-tRNA synthetase family. As to quaternary structure, tetramer of two alpha and two beta subunits.

The protein resides in the cytoplasm. The catalysed reaction is tRNA(Gly) + glycine + ATP = glycyl-tRNA(Gly) + AMP + diphosphate. In Persephonella marina (strain DSM 14350 / EX-H1), this protein is Glycine--tRNA ligase beta subunit.